Reading from the N-terminus, the 324-residue chain is Acetyl-coenzyme A carboxylase carboxyl transferase subunit alpha (324 aa).

A CoA carboxyltransferase C-terminal domain is found at 37 to 291; the sequence is KLERRLDKLK…RDFILREWLR (255 aa).

The protein belongs to the AccA family. In terms of assembly, acetyl-CoA carboxylase is a heterohexamer composed of biotin carboxyl carrier protein (AccB), biotin carboxylase (AccC) and two subunits each of ACCase subunit alpha (AccA) and ACCase subunit beta (AccD).

Its subcellular location is the cytoplasm. The enzyme catalyses N(6)-carboxybiotinyl-L-lysyl-[protein] + acetyl-CoA = N(6)-biotinyl-L-lysyl-[protein] + malonyl-CoA. The protein operates within lipid metabolism; malonyl-CoA biosynthesis; malonyl-CoA from acetyl-CoA: step 1/1. Component of the acetyl coenzyme A carboxylase (ACC) complex. First, biotin carboxylase catalyzes the carboxylation of biotin on its carrier protein (BCCP) and then the CO(2) group is transferred by the carboxyltransferase to acetyl-CoA to form malonyl-CoA. In Chlamydia abortus (strain DSM 27085 / S26/3) (Chlamydophila abortus), this protein is Acetyl-coenzyme A carboxylase carboxyl transferase subunit alpha.